We begin with the raw amino-acid sequence, 112 residues long: Lutropin subunit beta (112 aa).

Cystine bridges form between Cys-4–Cys-52, Cys-18–Cys-67, Cys-21–Cys-105, Cys-29–Cys-83, Cys-33–Cys-85, and Cys-88–Cys-95. A glycan (N-linked (GlcNAc...) asparagine) is linked at Asn-8.

It belongs to the glycoprotein hormones subunit beta family. Heterodimer of a common alpha chain and a unique beta chain which confers biological specificity to thyrotropin, lutropin, follitropin and gonadotropin.

The protein resides in the secreted. The protein is Lutropin subunit beta (lhb) of Aquarana catesbeiana (American bullfrog).